Reading from the N-terminus, the 219-residue chain is MTESHIDFRRAKFLISAPDIAHLDQYLPGDVGVEIAFAGRSNAGKSSALNALTEQKNLARTSKTPGRTQLINVFELDAQRRLVDLPGYGFAQVPLAMKLKWQQSLGEYLQKRACLSGVVVLMDIRHPLKDLDMQMIEWAVASEIPVLALLTKSDKLAQSAKMKTVNEVRKALVEFGDWVQVEPFSALKGTGKPKVLSILNEWCHPQWLADELENQDDAE.

The region spanning 31-205 is the EngB-type G domain; sequence VGVEIAFAGR…LSILNEWCHP (175 aa). GTP contacts are provided by residues 39-46, 66-70, 84-87, 151-154, and 184-186; these read GRSNAGKS, GRTQL, DLPG, TKSD, and FSA. Residues serine 46 and threonine 68 each contribute to the Mg(2+) site.

It belongs to the TRAFAC class TrmE-Era-EngA-EngB-Septin-like GTPase superfamily. EngB GTPase family. Mg(2+) is required as a cofactor.

Functionally, necessary for normal cell division and for the maintenance of normal septation. This is Probable GTP-binding protein EngB from Shewanella sp. (strain ANA-3).